The chain runs to 186 residues: Elongation factor P (186 aa).

The protein belongs to the elongation factor P family.

The protein localises to the cytoplasm. The protein operates within protein biosynthesis; polypeptide chain elongation. Involved in peptide bond synthesis. Stimulates efficient translation and peptide-bond synthesis on native or reconstituted 70S ribosomes in vitro. Probably functions indirectly by altering the affinity of the ribosome for aminoacyl-tRNA, thus increasing their reactivity as acceptors for peptidyl transferase. This is Elongation factor P from Brucella abortus (strain S19).